The chain runs to 241 residues: Demethylmenaquinone methyltransferase (241 aa).

S-adenosyl-L-methionine contacts are provided by residues threonine 60, aspartate 81, and 106-107 (DA).

It belongs to the class I-like SAM-binding methyltransferase superfamily. MenG/UbiE family.

It catalyses the reaction a 2-demethylmenaquinol + S-adenosyl-L-methionine = a menaquinol + S-adenosyl-L-homocysteine + H(+). The protein operates within quinol/quinone metabolism; menaquinone biosynthesis; menaquinol from 1,4-dihydroxy-2-naphthoate: step 2/2. Functionally, methyltransferase required for the conversion of demethylmenaquinol (DMKH2) to menaquinol (MKH2). In Staphylococcus epidermidis (strain ATCC 35984 / DSM 28319 / BCRC 17069 / CCUG 31568 / BM 3577 / RP62A), this protein is Demethylmenaquinone methyltransferase.